The sequence spans 619 residues: Leucine aminopeptidase 2 (619 aa).

Residues Gln141–Gln143 and Pro273–Glu278 each bind a peptide. His302 lines the Zn(2+) pocket. The active-site Proton acceptor is the Glu303. Zn(2+) contacts are provided by His306 and Glu325. Tyr390 functions as the Proton donor in the catalytic mechanism.

This sequence belongs to the peptidase M1 family. Zn(2+) serves as cofactor.

The protein localises to the cytoplasm. The protein resides in the nucleus. The catalysed reaction is an epoxide + H2O = an ethanediol. Functionally, aminopeptidase that preferentially cleaves di- and tripeptides. Also has low epoxide hydrolase activity (in vitro). Can hydrolyze the epoxide leukotriene LTA(4) but it forms preferentially 5,6-dihydroxy-7,9,11,14-eicosatetraenoic acid rather than the cytokine leukotriene B(4) as the product compared to the homologous mammalian enzyme (in vitro). The sequence is that of Leucine aminopeptidase 2 from Coccidioides immitis (strain RS) (Valley fever fungus).